We begin with the raw amino-acid sequence, 591 residues long: Zinc finger protein 48 (591 aa).

The residue at position 1 (Met1) is an N-acetylmethionine. Disordered stretches follow at residues 1–24 (MEASPGDEFEHSPQERDGPEIKEE) and 55–80 (GLGKRQPRDPVPRILGEPRWGQGSND). Basic and acidic residues-rich tracts occupy residues 8–24 (EFEHSPQERDGPEIKEE) and 55–65 (GLGKRQPRDPV). Ser12 carries the phosphoserine modification. A Glycyl lysine isopeptide (Lys-Gly) (interchain with G-Cter in SUMO2) cross-link involves residue Lys58. 2 C2H2-type zinc fingers span residues 83 to 105 (AVCGECGKSFRQMSDLVKHQRTH) and 111 to 133 (YKCGVCGKGFGDSSARIKHQRTH). The disordered stretch occupies residues 131-160 (RTHTGEKAYRVRPPAPGPPKMPRSRIPAGE). Lys150 is covalently cross-linked (Glycyl lysine isopeptide (Lys-Gly) (interchain with G-Cter in SUMO2)). 2 consecutive C2H2-type zinc fingers follow at residues 163–185 (TICGECGKSFRQSSDLVKHQRTH) and 191–213 (YKCGICGKGFGDSSARIKHQRTH). The tract at residues 206-241 (RIKHQRTHRGDQLPRPVVPRRQPSPAAPAAPHRPKA) is disordered. Low complexity predominate over residues 224 to 235 (PRRQPSPAAPAA). A Glycyl lysine isopeptide (Lys-Gly) (interchain with G-Cter in SUMO2) cross-link involves residue Lys240. 2 C2H2-type zinc fingers span residues 246–268 (YICTDCGKRFVLSCSLLSHQRSH) and 274–296 (FGCDVCGKEFARGSDLVKHLRVH). Lys300 is covalently cross-linked (Glycyl lysine isopeptide (Lys-Gly) (interchain with G-Cter in SUMO2)). 2 consecutive C2H2-type zinc fingers follow at residues 302 to 324 (YLCPECGKGFADSSARVKHLRTH) and 330 to 352 (HACPECNRSFSLSSTLLRHRLTH). A disordered region spans residues 372-429 (PPPPPLGTSPSLTPRSPSHSSDGPFGLPGLEPEPGGPQAGEPPPPLAGDKPHKCPECG). Low complexity predominate over residues 379-404 (TSPSLTPRSPSHSSDGPFGLPGLEPE). The segment at 423–445 (HKCPECGKGFRRSSDLVKHHRVH) adopts a C2H2-type 9 zinc-finger fold. Residue Lys449 forms a Glycyl lysine isopeptide (Lys-Gly) (interchain with G-Cter in SUMO2) linkage. A C2H2-type 10 zinc finger spans residues 451–473 (YLCPECGKGFADSSARVKHLRTH). Positions 464-512 (SARVKHLRTHQGERTRPPPPPSTLLRPHNPPGSVPIVPQSRVQGRPSGP) are disordered. Over residues 480–496 (PPPPPSTLLRPHNPPGS) the composition is skewed to pro residues. 2 C2H2-type zinc fingers span residues 516-538 (HVCGFCGKEFPRSSDLVKHRRTH) and 544-566 (YKCAECGKGFGDSSARIKHQRGH). A disordered region spans residues 564–591 (RGHLALKPFGVGDGPPRPLKEESPAGLE). A compositionally biased stretch (basic and acidic residues) spans 581-591 (PLKEESPAGLE). Residue Lys583 forms a Glycyl lysine isopeptide (Lys-Gly) (interchain with G-Cter in SUMO2) linkage.

Belongs to the krueppel C2H2-type zinc-finger protein family.

Its subcellular location is the nucleus. Functionally, may be involved in transcriptional regulation. The protein is Zinc finger protein 48 (Znf48) of Mus musculus (Mouse).